Here is a 273-residue protein sequence, read N- to C-terminus: Pantothenate synthetase (273 aa).

M27 to H34 contacts ATP. The Proton donor role is filled by H34. Q58 serves as a coordination point for (R)-pantoate. Q58 is a binding site for beta-alanine. An ATP-binding site is contributed by G144–D147. A (R)-pantoate-binding site is contributed by Q150. ATP is bound by residues V173 and L181 to R184.

The protein belongs to the pantothenate synthetase family. Homodimer.

It is found in the cytoplasm. It catalyses the reaction (R)-pantoate + beta-alanine + ATP = (R)-pantothenate + AMP + diphosphate + H(+). Its pathway is cofactor biosynthesis; (R)-pantothenate biosynthesis; (R)-pantothenate from (R)-pantoate and beta-alanine: step 1/1. Catalyzes the condensation of pantoate with beta-alanine in an ATP-dependent reaction via a pantoyl-adenylate intermediate. In Campylobacter fetus subsp. fetus (strain 82-40), this protein is Pantothenate synthetase.